Here is a 507-residue protein sequence, read N- to C-terminus: ATP synthase subunit alpha (507 aa).

An ATP-binding site is contributed by 171 to 178 (GDRQTGKT).

It belongs to the ATPase alpha/beta chains family. As to quaternary structure, F-type ATPases have 2 components, CF(1) - the catalytic core - and CF(0) - the membrane proton channel. CF(1) has five subunits: alpha(3), beta(3), gamma(1), delta(1), epsilon(1). CF(0) has three main subunits: a(1), b(2) and c(9-12). The alpha and beta chains form an alternating ring which encloses part of the gamma chain. CF(1) is attached to CF(0) by a central stalk formed by the gamma and epsilon chains, while a peripheral stalk is formed by the delta and b chains.

Its subcellular location is the cell inner membrane. The enzyme catalyses ATP + H2O + 4 H(+)(in) = ADP + phosphate + 5 H(+)(out). Functionally, produces ATP from ADP in the presence of a proton gradient across the membrane. The alpha chain is a regulatory subunit. The polypeptide is ATP synthase subunit alpha (Bdellovibrio bacteriovorus (strain ATCC 15356 / DSM 50701 / NCIMB 9529 / HD100)).